The following is a 25-amino-acid chain: Brevinin-2R (25 aa).

C19 and C25 are disulfide-bonded.

This sequence belongs to the frog skin active peptide (FSAP) family. Brevinin subfamily. In terms of tissue distribution, expressed by the skin glands.

The protein resides in the secreted. Functionally, cytotoxic to cancer cells, acts via the activation of the lysosomal-mitochondrial death pathway and autophagy-like cell death. Does not show significant hemolytic activity. The sequence is that of Brevinin-2R from Pelophylax ridibundus (Marsh frog).